A 160-amino-acid polypeptide reads, in one-letter code: SsrA-binding protein (160 aa).

The segment at 133–160 (KKLHDKRETEKERDWNRQKSRLLKGNSQ) is disordered. Basic and acidic residues predominate over residues 137–149 (DKRETEKERDWNR).

This sequence belongs to the SmpB family.

It localises to the cytoplasm. In terms of biological role, required for rescue of stalled ribosomes mediated by trans-translation. Binds to transfer-messenger RNA (tmRNA), required for stable association of tmRNA with ribosomes. tmRNA and SmpB together mimic tRNA shape, replacing the anticodon stem-loop with SmpB. tmRNA is encoded by the ssrA gene; the 2 termini fold to resemble tRNA(Ala) and it encodes a 'tag peptide', a short internal open reading frame. During trans-translation Ala-aminoacylated tmRNA acts like a tRNA, entering the A-site of stalled ribosomes, displacing the stalled mRNA. The ribosome then switches to translate the ORF on the tmRNA; the nascent peptide is terminated with the 'tag peptide' encoded by the tmRNA and targeted for degradation. The ribosome is freed to recommence translation, which seems to be the essential function of trans-translation. This is SsrA-binding protein from Agrobacterium fabrum (strain C58 / ATCC 33970) (Agrobacterium tumefaciens (strain C58)).